The sequence spans 271 residues: Ribosomal RNA small subunit methyltransferase A (271 aa).

S-adenosyl-L-methionine-binding residues include histidine 11, leucine 13, glycine 38, glutamate 58, aspartate 86, and asparagine 101.

This sequence belongs to the class I-like SAM-binding methyltransferase superfamily. rRNA adenine N(6)-methyltransferase family. RsmA subfamily.

It is found in the cytoplasm. It catalyses the reaction adenosine(1518)/adenosine(1519) in 16S rRNA + 4 S-adenosyl-L-methionine = N(6)-dimethyladenosine(1518)/N(6)-dimethyladenosine(1519) in 16S rRNA + 4 S-adenosyl-L-homocysteine + 4 H(+). Functionally, specifically dimethylates two adjacent adenosines (A1518 and A1519) in the loop of a conserved hairpin near the 3'-end of 16S rRNA in the 30S particle. May play a critical role in biogenesis of 30S subunits. The protein is Ribosomal RNA small subunit methyltransferase A of Helicobacter pylori (strain HPAG1).